The sequence spans 331 residues: DNA fragmentation factor subunit alpha (331 aa).

Met1 carries the post-translational modification N-acetylmethionine. A CIDE-N domain is found at 17–96 (TLKPCLLRRN…ALASNEKWAY (80 aa)). Thr243 bears the Phosphothreonine mark. The interval 305 to 331 (SLRSISASKASPPGDLQNPKRARQDPT) is disordered. Residue Ser315 is modified to Phosphoserine.

In terms of assembly, heterodimer of DFFA and DFFB. In terms of processing, caspase-3 cleaves DFF45 at 2 sites to generate an active factor.

The protein resides in the cytoplasm. Its function is as follows. Inhibitor of the caspase-activated DNase (DFF40). This Homo sapiens (Human) protein is DNA fragmentation factor subunit alpha (DFFA).